Reading from the N-terminus, the 1496-residue chain is Carbamoyl-phosphate synthase [ammonia], mitochondrial (1496 aa).

The N-terminal 33 residues, Met1–Leu33, are a transit peptide targeting the mitochondrion. Residues Met34–Val214 form an anthranilate phosphoribosyltransferase homolog region. In terms of domain architecture, Glutamine amidotransferase type-1 spans Arg215–Thr401. Cys290 acts as the For GATase activity in catalysis. 2 ATP-grasp domains span residues Ser548–Leu740 and Ser1090–Ile1281. The region spanning Phe1352–Ser1496 is the MGS-like domain. N-acetyl-L-glutamate-binding residues include Thr1388, Thr1391, Trp1407, Asn1433, Asn1436, and Asn1445.

The protein localises to the mitochondrion. The enzyme catalyses hydrogencarbonate + NH4(+) + 2 ATP = carbamoyl phosphate + 2 ADP + phosphate + 2 H(+). Requires N-acetyl-L-glutamate (NAG) as an allosteric activator. Functionally, involved in the urea cycle of ureotelic animals where the enzyme plays an important role in removing excess ammonia from the cell. This Aquarana catesbeiana (American bullfrog) protein is Carbamoyl-phosphate synthase [ammonia], mitochondrial.